We begin with the raw amino-acid sequence, 311 residues long: HPr kinase/phosphorylase (311 aa).

Residues H138 and K159 contribute to the active site. 153–160 (GSSGIGKS) serves as a coordination point for ATP. S160 contributes to the Mg(2+) binding site. Catalysis depends on D177, which acts as the Proton acceptor; for phosphorylation activity. Proton donor; for dephosphorylation activity. The segment at 201–210 (LEIRGVGIIN) is important for the catalytic mechanism of both phosphorylation and dephosphorylation. Position 202 (E202) interacts with Mg(2+). The active site involves R243. Positions 264–269 (PVRPGR) are important for the catalytic mechanism of dephosphorylation.

The protein belongs to the HPrK/P family. Homohexamer. The cofactor is Mg(2+).

The enzyme catalyses [HPr protein]-L-serine + ATP = [HPr protein]-O-phospho-L-serine + ADP + H(+). The catalysed reaction is [HPr protein]-O-phospho-L-serine + phosphate + H(+) = [HPr protein]-L-serine + diphosphate. Functionally, catalyzes the ATP- as well as the pyrophosphate-dependent phosphorylation of a specific serine residue in HPr, a phosphocarrier protein of the phosphoenolpyruvate-dependent sugar phosphotransferase system (PTS). HprK/P also catalyzes the pyrophosphate-producing, inorganic phosphate-dependent dephosphorylation (phosphorolysis) of seryl-phosphorylated HPr (P-Ser-HPr). The two antagonistic activities of HprK/P are regulated by several intracellular metabolites, which change their concentration in response to the absence or presence of rapidly metabolisable carbon sources (glucose, fructose, etc.) in the growth medium. Therefore, by controlling the phosphorylation state of HPr, HPrK/P is a sensor enzyme that plays a major role in the regulation of carbon metabolism and sugar transport: it mediates carbon catabolite repression (CCR), and regulates PTS-catalyzed carbohydrate uptake and inducer exclusion. The sequence is that of HPr kinase/phosphorylase from Brevibacillus brevis (strain 47 / JCM 6285 / NBRC 100599).